Reading from the N-terminus, the 173-residue chain is Alpha-crystallin A chain (173 aa).

Residue Met-1 is modified to N-acetylmethionine. A required for complex formation with BFSP1 and BFSP2 region spans residues 1–63 (MDITIQHPWF…RTVLESGISE (63 aa)). The residue at position 6 (Gln-6) is a Deamidated glutamine; partial. Position 45 is a phosphoserine (Ser-45). Deamidated glutamine; partial is present on Gln-50. The region spanning 52–164 (LFRTVLESGI…SDRSIPVSRE (113 aa)) is the sHSP domain. An N6-acetyllysine modification is found at Lys-99. Positions 100, 102, and 107 each coordinate Zn(2+). Ser-122 bears the Phosphoserine mark. Asn-123 carries the post-translational modification Deamidated asparagine; partial. The tract at residues 144–173 (PKIHSNMESSHSDRSIPVSREEKPTLAPSS) is disordered. The segment covering 153 to 167 (SHSDRSIPVSREEKP) has biased composition (basic and acidic residues). A Zn(2+)-binding site is contributed by His-154. A glycan (O-linked (GlcNAc) serine) is linked at Ser-162.

Belongs to the small heat shock protein (HSP20) family. As to quaternary structure, heteromer composed of three CRYAA and one CRYAB subunits. Inter-subunit bridging via zinc ions enhances stability, which is crucial as there is no protein turn over in the lens. Can also form homodimers and homotetramers (dimers of dimers) which serve as the building blocks of homooligomers. Within homooligomers, the zinc-binding motif is created from residues of 3 different molecules. His-100 and Glu-102 from one molecule are ligands of the zinc ion, and His-107 and His-154 residues from additional molecules complete the site with tetrahedral coordination geometry. Part of a complex required for lens intermediate filament formation composed of BFSP1, BFSP2 and CRYAA. Post-translationally, acetylation at Lys-99 may increase chaperone activity. Undergoes age-dependent proteolytical cleavage at the C-terminus.

It is found in the cytoplasm. The protein localises to the nucleus. Functionally, contributes to the transparency and refractive index of the lens. Acts as a chaperone, preventing aggregation of various proteins under a wide range of stress conditions. Required for the correct formation of lens intermediate filaments as part of a complex composed of BFSP1, BFSP2 and CRYAA. This Didelphis virginiana (North American opossum) protein is Alpha-crystallin A chain (CRYAA).